Consider the following 160-residue polypeptide: Heme transporter hrg-5 (160 aa).

The helical transmembrane segment at 21-41 threads the bilayer; that stretch reads IALTILDILIGFSNILSYAIQ. N-linked (GlcNAc...) asparagine glycosylation is present at Asn44. A run of 3 helical transmembrane segments spans residues 47–67, 89–109, and 123–142; these read ALTL…MFLA, ITLG…AGVT, and FTGL…ALLA. Asn144 carries N-linked (GlcNAc...) asparagine glycosylation.

Belongs to the HRG family.

The protein resides in the membrane. Heme transporter. The protein is Heme transporter hrg-5 (hrg-5) of Caenorhabditis elegans.